The sequence spans 229 residues: Cytidylate kinase (229 aa).

12-20 (GPSGAGKGT) contacts ATP.

Belongs to the cytidylate kinase family. Type 1 subfamily.

It is found in the cytoplasm. It catalyses the reaction CMP + ATP = CDP + ADP. The enzyme catalyses dCMP + ATP = dCDP + ADP. The polypeptide is Cytidylate kinase (Pseudomonas paraeruginosa (strain DSM 24068 / PA7) (Pseudomonas aeruginosa (strain PA7))).